The sequence spans 141 residues: Large ribosomal subunit protein uL11 (141 aa).

Belongs to the universal ribosomal protein uL11 family. In terms of assembly, part of the ribosomal stalk of the 50S ribosomal subunit. Interacts with L10 and the large rRNA to form the base of the stalk. L10 forms an elongated spine to which L12 dimers bind in a sequential fashion forming a multimeric L10(L12)X complex. One or more lysine residues are methylated.

In terms of biological role, forms part of the ribosomal stalk which helps the ribosome interact with GTP-bound translation factors. The chain is Large ribosomal subunit protein uL11 from Thermomicrobium roseum (strain ATCC 27502 / DSM 5159 / P-2).